The sequence spans 123 residues: Histone H2B (123 aa).

Residues 1 to 31 (MPPKTSGKAAKKAGKAQKNITKNDKKKKRKR) form a disordered region. An N-methylproline; partial modification is found at P2. K44 is subject to N6-succinyllysine. O-linked (GlcNAc) serine glycosylation occurs at S110. N6-succinyllysine occurs at positions 114 and 118. Residue K118 forms a Glycyl lysine isopeptide (Lys-Gly) (interchain with G-Cter in ubiquitin) linkage.

The protein belongs to the histone H2B family. As to quaternary structure, the nucleosome is a histone octamer containing two molecules each of H2A, H2B, H3 and H4 assembled in one H3-H4 heterotetramer and two H2A-H2B heterodimers. The octamer wraps approximately 147 bp of DNA. Phosphorylated by the catalytic component of the Dbf4-dependent kinase (DDK) complex Cdc7. Post-translationally, monoubiquitination of Lys-118 by Bre1 gives a specific tag for epigenetic transcriptional activation and is also prerequisite for histone H3 'Lys-4' and 'Lys-79' methylation. Deubiquitination of Lys-118 by the SAGA complex is involved in activating transcription of a large subset of genes. In terms of processing, methylation at Pro-2 increases upon heat shock. GlcNAcylation at Ser-110 promotes monoubiquitination of Lys-118. It fluctuates in response to extracellular glucose, and associates with transcribed genes.

It is found in the nucleus. The protein localises to the chromosome. In terms of biological role, core component of nucleosome. Nucleosomes wrap and compact DNA into chromatin, limiting DNA accessibility to the cellular machineries which require DNA as a template. Histones thereby play a central role in transcription regulation, DNA repair, DNA replication and chromosomal stability. DNA accessibility is regulated via a complex set of post-translational modifications of histones, also called histone code, and nucleosome remodeling. In Drosophila sechellia (Fruit fly), this protein is Histone H2B (His2B).